Reading from the N-terminus, the 372-residue chain is uncharacterized protein (372 aa).

The disordered stretch occupies residues 49–72 (FSHKGGGKGGGSGAGSNDGGCSGE). Residues 55-70 (GKGGGSGAGSNDGGCS) show a composition bias toward gly residues.

This is an uncharacterized protein from Halorubrum lacusprofundi (strain ATCC 49239 / DSM 5036 / JCM 8891 / ACAM 34).